A 208-amino-acid chain; its full sequence is Uridine kinase (208 aa).

11–18 (GGTGSGKS) serves as a coordination point for ATP.

The protein belongs to the uridine kinase family.

It localises to the cytoplasm. The enzyme catalyses uridine + ATP = UMP + ADP + H(+). It carries out the reaction cytidine + ATP = CMP + ADP + H(+). It functions in the pathway pyrimidine metabolism; CTP biosynthesis via salvage pathway; CTP from cytidine: step 1/3. The protein operates within pyrimidine metabolism; UMP biosynthesis via salvage pathway; UMP from uridine: step 1/1. This Clostridium novyi (strain NT) protein is Uridine kinase.